A 442-amino-acid chain; its full sequence is Protein bangles and beads (442 aa).

The tract at residues A47–N442 is disordered. Basic and acidic residues-rich tracts occupy residues P55–E67, P114–P125, and E133–A146. The segment covering A159–E172 has biased composition (low complexity). 2 stretches are compositionally biased toward basic and acidic residues: residues V177 to E194 and A204 to K240. 2 stretches are compositionally biased toward low complexity: residues A241–K255 and S272–A288. Over residues E329–P339 the composition is skewed to basic and acidic residues. Positions T357–P376 are enriched in low complexity. Residues E408–N442 show a composition bias toward basic and acidic residues. 4 positions are modified to phosphoserine: S430, S433, S436, and S437.

Expressed in the embryonic CNS, in sets of cells that are segmentally reiterated along the periphery of the nervous system.

Its function is as follows. May play an important role during development. This Drosophila melanogaster (Fruit fly) protein is Protein bangles and beads (bnb).